We begin with the raw amino-acid sequence, 188 residues long: RWD domain-containing protein 4 (188 aa).

In terms of domain architecture, RWD spans 9–111 (MELEALRSIY…EYAKDNKEQF (103 aa)). The disordered stretch occupies residues 132–167 (TPSAAPSSKKKDKKEQLSKAQKRKLADKTDHKGELP). The segment covering 155–166 (KLADKTDHKGEL) has biased composition (basic and acidic residues).

The polypeptide is RWD domain-containing protein 4 (Rwdd4) (Rattus norvegicus (Rat)).